The primary structure comprises 205 residues: Small ribosomal subunit protein uS4 (205 aa).

Basic and acidic residues predominate over residues 1–16 (MSKRETTKYKIDRRMG). The disordered stretch occupies residues 1–46 (MSKRETTKYKIDRRMGENIWGRPKSPVNRRDYGPGQHGQRRKGKLS). The S4 RNA-binding domain occupies 94–157 (SRLDAVIYRA…KQLVLVLESV (64 aa)).

Belongs to the universal ribosomal protein uS4 family. As to quaternary structure, part of the 30S ribosomal subunit. Contacts protein S5. The interaction surface between S4 and S5 is involved in control of translational fidelity.

One of the primary rRNA binding proteins, it binds directly to 16S rRNA where it nucleates assembly of the body of the 30S subunit. In terms of biological role, with S5 and S12 plays an important role in translational accuracy. The chain is Small ribosomal subunit protein uS4 from Bartonella henselae (strain ATCC 49882 / DSM 28221 / CCUG 30454 / Houston 1) (Rochalimaea henselae).